A 456-amino-acid polypeptide reads, in one-letter code: RNA polymerase II-associated protein 1 homolog (456 aa).

The interval 382 to 456 (LRSVEGSLNE…PVEQLQNEED (75 aa)) is disordered. At S388 the chain carries Phosphoserine. Positions 396-406 (EEKPAESREQL) are enriched in basic and acidic residues. 2 stretches are compositionally biased toward polar residues: residues 408 to 433 (SAEQ…QANS) and 441 to 456 (GNTQ…NEED).

The protein belongs to the PAF1 family.

The protein localises to the cytoplasm. Its subcellular location is the nucleus. The chain is RNA polymerase II-associated protein 1 homolog from Schizosaccharomyces pombe (strain 972 / ATCC 24843) (Fission yeast).